The following is a 457-amino-acid chain: ATP synthase subunit beta (457 aa).

Residue 147-154 (GGAGVGKT) coordinates ATP.

It belongs to the ATPase alpha/beta chains family. F-type ATPases have 2 components, CF(1) - the catalytic core - and CF(0) - the membrane proton channel. CF(1) has five subunits: alpha(3), beta(3), gamma(1), delta(1), epsilon(1). CF(0) has three main subunits: a(1), b(2) and c(9-12). The alpha and beta chains form an alternating ring which encloses part of the gamma chain. CF(1) is attached to CF(0) by a central stalk formed by the gamma and epsilon chains, while a peripheral stalk is formed by the delta and b chains.

It localises to the cell inner membrane. It carries out the reaction ATP + H2O + 4 H(+)(in) = ADP + phosphate + 5 H(+)(out). In terms of biological role, produces ATP from ADP in the presence of a proton gradient across the membrane. The catalytic sites are hosted primarily by the beta subunits. The sequence is that of ATP synthase subunit beta from Haemophilus influenzae (strain PittEE).